A 1464-amino-acid polypeptide reads, in one-letter code: MAGIIKKQILKHLSRFTKNLSPDKINLSTLKGEGELKNLELDEEVLQNMLDLPTWLAINKVFCNKASIRIPWTKLKTHPICLSLDKVIMEMSTCEEPRSPNGPSPIATASGQSEYGFAEKVVEGISVSVNSIVIRIGAKAFNASFELSQLRIYSVNAHWEHGDLRFTRIQDPQRGEVLTFKEINWQMIRIEADATQSSHLEIMCAPVRLITNQSKIRVTLKRRLKDCNVIATKLVLILDDLLWVLTDSQLKAMVQYAKSLSEAIEKSTEQRKSMAPEPTQSSTVVASAQQVKTTQTSNAPDVNDAIVKLFNDFDVKETSHHLVISHLDLHICDDIHAKEKESNRRITGGAMQLSFTQLTIDYYPYHKAGDSCNHWMYFSDATKTKNGWANELLHEFECNVEMLKQAVKDHNVGSPPKSPTHASPQHTQTEKDYPLKGTCRTPSVLSQQSKAKLMSSSVVVRLADFNIYQVSTAEQCRSSPKSMICCNKKSLYLPQEMSAVYIEFTEYYYPDGKDFPIPSPNLYSQLNALQFTVDERSILWLNQFLLDLKQSLNQFMAVYKLNDNSKSDEHVDVRVDGLMLKFVIPSEVKSECHQDQPRAISIQSSEMIATNTRHCPNCRHSDLEALFQDFKDCDFFSKTYTSFPKSCDNFNLLHPIFQRHAHEQDTKMHEIYKGNITPQLNKNTLKTSAATDVWAVYFSQFWIDYEGMKSGKGRPISFVDSFPLSIWICQPTRYAESQKEPQTCNQVSLNTSQSESSDLAGRLKRKKLLKEYYSTESEPLTNGGQKPSSSDTFFRFSPSSSEADIHLLVHVHKHVSMQINHYQYLLLLFLHESLILLSENLRKDVEAVTGSPASQTSICIGILLRSAELALLLHPVDQANTLKSPVSESVSPVVPDYLPTENGDFLSSKRKQISRDINRIRSVTVNHMSDNRSMSVDLSHIPLKDPLLFKSASDTNLQKGISFMDYLSDKHLGKISEDESSGLVYKSGSGEIGSETSDKKDSFYTDSSSILNYREDSNILSFDSDGNQNILSSTLTSKGNETIESIFKAEDLLPEAASLSENLDISKEETPPVRTLKSQSSLSGKPKERCPPNLAPLCVSYKNMKRSSSQMSLDTISLDSMILEEQLLESDGSDSHMFLEKGNKKNSTTNYRGTAESVNAGANLQNYGETSPDAISTNSEGAQENHDDLMSVVVFKITGVNGEIDIRGEDTEICLQVNQVTPDQLGNISLRHYLCNRPVGSDQKAVIHSKSSPEISLRFESGPGAVIHSLLAEKNGFLQCHIENFSTEFLTSSLMNIQHFLEDETVATVMPMKIQVSNTKINLKDDSPRSSTVSLEPAPVTVHIDHLVVERSDDGSFHIRDSHMLNTGNDLKENVKSDSVLLTSGKYDLKKQRSVTQATQTSPGVPWPSQSANFPEFSFDFTREQLMEENESLKQELAKAKMALAEAHLEKDALLHHIKKMTVE.

The 92-residue stretch at 3–94 (GIIKKQILKH…DKVIMEMSTC (92 aa)) folds into the Chorein N-terminal domain. Disordered regions lie at residues 267-297 (STEQRKSMAPEPTQSSTVVASAQQVKTTQTS) and 409-436 (DHNVGSPPKSPTHASPQHTQTEKDYPLK). Polar residues predominate over residues 278–297 (PTQSSTVVASAQQVKTTQTS). Phosphoserine is present on residues Ser414, Ser418, Ser774, Ser935, and Ser1009. 3 disordered regions span residues 1066-1089 (SKEETPPVRTLKSQSSLSGKPKER), 1164-1183 (LQNYGETSPDAISTNSEGAQ), and 1392-1413 (QRSVTQATQTSPGVPWPSQSAN). 2 stretches are compositionally biased toward polar residues: residues 1164–1182 (LQNYGETSPDAISTNSEGA) and 1394–1413 (SVTQATQTSPGVPWPSQSAN). The stretch at 1418–1456 (SFDFTREQLMEENESLKQELAKAKMALAEAHLEKDALLH) forms a coiled coil.

Monomer. Homodimer (via N-terminus). Associates with the Golgi-associated retrograde protein (GARP) complex. Interacts with GARP complex component VPS52. Interacts (via C-terminal coiled-coil domain) with STX6.

Its subcellular location is the cytoplasm. The protein localises to the cytosol. The protein resides in the early endosome. Functionally, tube-forming lipid transport protein which mediates the transfer of lipids between membranes at organelle contact sites. Required for retrograde traffic of vesicle clusters in the early endocytic pathway to the Golgi complex. This Homo sapiens (Human) protein is Bridge-like lipid transfer protein family member 3B.